We begin with the raw amino-acid sequence, 330 residues long: GMP reductase (330 aa).

Cys180 serves as the catalytic Thioimidate intermediate. Leu209–Val232 serves as a coordination point for NADP(+).

Belongs to the IMPDH/GMPR family. GuaC type 2 subfamily.

It catalyses the reaction IMP + NH4(+) + NADP(+) = GMP + NADPH + 2 H(+). Catalyzes the irreversible NADPH-dependent deamination of GMP to IMP. It functions in the conversion of nucleobase, nucleoside and nucleotide derivatives of G to A nucleotides, and in maintaining the intracellular balance of A and G nucleotides. This chain is GMP reductase, found in Lactobacillus acidophilus (strain ATCC 700396 / NCK56 / N2 / NCFM).